The chain runs to 90 residues: Large ribosomal subunit protein bL27 (90 aa).

Residues 1–21 (MAHTKAGGTTRNSRDSAGRRL) are disordered.

It belongs to the bacterial ribosomal protein bL27 family.

This Metamycoplasma arthritidis (strain 158L3-1) (Mycoplasma arthritidis) protein is Large ribosomal subunit protein bL27.